We begin with the raw amino-acid sequence, 236 residues long: Small ribosomal subunit protein uS2c (236 aa).

It belongs to the universal ribosomal protein uS2 family.

It is found in the plastid. It localises to the chloroplast. This is Small ribosomal subunit protein uS2c (rps2) from Lemna minor (Common duckweed).